A 212-amino-acid polypeptide reads, in one-letter code: ER lumen protein-retaining receptor 2 (212 aa).

The Lumenal segment spans residues 1–4; that stretch reads MNVF. Residues 5 to 24 form a helical membrane-spanning segment; sequence RLSGDLCHLAAIIILLLKIW. Residues 25–32 lie on the Cytoplasmic side of the membrane; it reads NSRSCAGI. A helical membrane pass occupies residues 33 to 52; sequence SGKSQLLFAMVFTTRYLDLF. The interval 47–48 is interaction with the K-D-E-L motif on target proteins; sequence RY. At 53-58 the chain is on the lumenal side; that stretch reads TSFISL. Residues 59 to 79 traverse the membrane as a helical segment; that stretch reads YNTSMKVIYMGCAYATVYLIY. Residues 80–92 are Cytoplasmic-facing; it reads MKFKATYDGNHDT. Residues 93-110 traverse the membrane as a helical segment; it reads FRVEFLVVPVGGLSVLVN. Residues 111–116 are Lumenal-facing; sequence HDFSPL. A helical transmembrane segment spans residues 117–135; it reads EILWTFSIYLESVAILPQL. Residues 136–149 lie on the Cytoplasmic side of the membrane; the sequence is FMISKTGEAETITT. A helical transmembrane segment spans residues 150 to 168; that stretch reads HYLFFLGLYRALYLFNWIW. The interaction with the K-D-E-L motif on target proteins stretch occupies residues 159 to 169; sequence RALYLFNWIWR. Residues 169–178 lie on the Lumenal side of the membrane; that stretch reads RFSFEGFFDL. Residues 179–199 form a helical membrane-spanning segment; that stretch reads IAIVAGVVQTILYCDFFYLYV. The Cytoplasmic segment spans residues 200–212; that stretch reads TKVLKGKKLSLPA. The important for recycling of cargo proteins with the sequence motif K-D-E-L from the Golgi to the endoplasmic reticulum stretch occupies residues 204-207; the sequence is KGKK.

The protein belongs to the ERD2 family.

It is found in the endoplasmic reticulum membrane. It localises to the golgi apparatus membrane. The protein resides in the cytoplasmic vesicle. Its subcellular location is the COPI-coated vesicle membrane. Its function is as follows. Receptor for the C-terminal sequence motif K-D-E-L that is present on endoplasmic reticulum resident proteins and that mediates their recycling from the Golgi back to the endoplasmic reticulum. Binding is pH dependent, and is optimal at pH 5-5.4. The protein is ER lumen protein-retaining receptor 2 (kdelr2) of Xenopus laevis (African clawed frog).